The primary structure comprises 457 residues: Exodeoxyribonuclease 7 large subunit (457 aa).

Belongs to the XseA family. As to quaternary structure, heterooligomer composed of large and small subunits.

It localises to the cytoplasm. The catalysed reaction is Exonucleolytic cleavage in either 5'- to 3'- or 3'- to 5'-direction to yield nucleoside 5'-phosphates.. Bidirectionally degrades single-stranded DNA into large acid-insoluble oligonucleotides, which are then degraded further into small acid-soluble oligonucleotides. This chain is Exodeoxyribonuclease 7 large subunit, found in Enterobacter sp. (strain 638).